The primary structure comprises 594 residues: Alanine--tRNA ligase (594 aa).

Zn(2+)-binding residues include His456, His460, Cys558, and His562.

Belongs to the class-II aminoacyl-tRNA synthetase family. Zn(2+) serves as cofactor.

It localises to the cytoplasm. It catalyses the reaction tRNA(Ala) + L-alanine + ATP = L-alanyl-tRNA(Ala) + AMP + diphosphate. Functionally, catalyzes the attachment of alanine to tRNA(Ala) in a two-step reaction: alanine is first activated by ATP to form Ala-AMP and then transferred to the acceptor end of tRNA(Ala). Also edits incorrectly charged Ser-tRNA(Ala) and Gly-tRNA(Ala) via its editing domain. This Borreliella afzelii (strain PKo) (Borrelia afzelii) protein is Alanine--tRNA ligase (alaS).